Reading from the N-terminus, the 198-residue chain is Recombination protein RecR (198 aa).

A C4-type zinc finger spans residues 57 to 72; sequence CRQCRTLSEEELCPQC. Residues 80-174 form the Toprim domain; sequence SLLCVVEGPL…TLSRIAHGVP (95 aa).

It belongs to the RecR family.

Its function is as follows. May play a role in DNA repair. It seems to be involved in an RecBC-independent recombinational process of DNA repair. It may act with RecF and RecO. In Pseudomonas aeruginosa (strain LESB58), this protein is Recombination protein RecR.